The following is a 29-amino-acid chain: Cytochrome c oxidase subunit 7A1, mitochondrial (29 aa).

Positions 1-13 are enriched in basic and acidic residues; the sequence is LENRVAEKQKLFQ. Residues 1–29 form a disordered region; that stretch reads LENRVAEKQKLFQEDNGLPVHLKGGATDN.

It belongs to the cytochrome c oxidase VIIa family. As to quaternary structure, component of the complex IV (CIV, cytochrome c oxidase), a multisubunit enzyme composed of 14 subunits. The complex is composed of a catalytic core of 3 subunits MT-CO1, MT-CO2 and MT-CO3, encoded in the mitochondrial DNA, and 11 supernumerary subunits COX4I1 (or COX4I2), COX5A, COX5B, COX6A2 (or COX6A1), COX6B1 (or COX6B2), COX6C, COX7A1 (or COX7A2), COX7B, COX7C, COX8B and NDUFA4, which are encoded in the nuclear genome. The complex exists as a monomer or a dimer and forms supercomplexes (SCs) in the inner mitochondrial membrane with NADH-ubiquinone oxidoreductase (complex I, CI) and ubiquinol-cytochrome c oxidoreductase (cytochrome b-c1 complex, complex III, CIII), resulting in different assemblies (supercomplex SCI(1)III(2)IV(1) and megacomplex MCI(2)III(2)IV(2)).

The protein resides in the mitochondrion inner membrane. The protein operates within energy metabolism; oxidative phosphorylation. Functionally, component of the mitochondrial respiratory complex IV (CIV, also named cytochrome c oxidase complex), the last enzyme in the mitochondrial electron transport chain which drives oxidative phosphorylation. The CIV complex is the component of the respiratory chain that catalyzes the reduction of oxygen to water. Acts as an assembly factor that specifically drives the homodimerization of CIV complexes, mediating the formation of mitochondrial respiratory supercomplexes (respirasomes) containing two CIV: supercomplxes with two molecules of CIV show improved activity. Despite being highly expressed in brown adipose tissue, not required for thermogenesis. The polypeptide is Cytochrome c oxidase subunit 7A1, mitochondrial (COX7A1) (Ovis aries (Sheep)).